We begin with the raw amino-acid sequence, 138 residues long: Ribulose bisphosphate carboxylase small subunit (138 aa).

This sequence belongs to the RuBisCO small chain family. Heterohexadecamer of 8 large and 8 small subunits.

The protein resides in the plastid. The protein localises to the chloroplast. RuBisCO catalyzes two reactions: the carboxylation of D-ribulose 1,5-bisphosphate, the primary event in carbon dioxide fixation, as well as the oxidative fragmentation of the pentose substrate in the photorespiration process. Both reactions occur simultaneously and in competition at the same active site. Although the small subunit is not catalytic it is essential for maximal activity. In Pyropia haitanensis (Red seaweed), this protein is Ribulose bisphosphate carboxylase small subunit.